Consider the following 623-residue polypeptide: Replication protein A 70 kDa DNA-binding subunit (623 aa).

At Met-1 the chain carries N-acetylmethionine. Glycyl lysine isopeptide (Lys-Gly) (interchain with G-Cter in ubiquitin) cross-links involve residues Lys-22 and Lys-88. The tract at residues 116-163 (VPYNEGYGQQQQQQQQQQQQAVPSPASAATPPASKPQPQNGSLGMGST) is disordered. Positions 124–154 (QQQQQQQQQQQQAVPSPASAATPPASKPQPQ) are enriched in low complexity. Residues Lys-172 and Lys-176 each carry the N6-acetyllysine; alternate modification. Glycyl lysine isopeptide (Lys-Gly) (interchain with G-Cter in ubiquitin); alternate cross-links involve residues Lys-172 and Lys-176. A Phosphothreonine modification is found at Thr-189. Residue Lys-192 forms a Glycyl lysine isopeptide (Lys-Gly) (interchain with G-Cter in ubiquitin) linkage. Thr-200 bears the Phosphothreonine mark. The OB DNA-binding region spans 206–290 (WTICARVTNK…VKNDYEMTFN (85 aa)). Glycyl lysine isopeptide (Lys-Gly) (interchain with G-Cter in ubiquitin) cross-links involve residues Lys-229 and Lys-253. At Lys-268 the chain carries N6-acetyllysine; alternate. Lys-268 participates in a covalent cross-link: Glycyl lysine isopeptide (Lys-Gly) (interchain with G-Cter in ubiquitin); alternate. Residues Lys-276 and Lys-340 each participate in a glycyl lysine isopeptide (Lys-Gly) (interchain with G-Cter in ubiquitin) cross-link. The residue at position 393 (Ser-393) is a Phosphoserine. Residue Lys-419 forms a Glycyl lysine isopeptide (Lys-Gly) (interchain with G-Cter in ubiquitin) linkage. Lys-458 participates in a covalent cross-link: Glycyl lysine isopeptide (Lys-Gly) (interchain with G-Cter in SUMO). Residue Lys-467 forms a Glycyl lysine isopeptide (Lys-Gly) (interchain with G-Cter in ubiquitin) linkage. A C4-type zinc finger spans residues 490–512 (CPTQDCNKKVIDQQNGLYRCEKC). Residue Lys-562 forms a Glycyl lysine isopeptide (Lys-Gly) (interchain with G-Cter in ubiquitin) linkage. Lys-586 participates in a covalent cross-link: Glycyl lysine isopeptide (Lys-Gly) (interchain with G-Cter in SUMO).

It belongs to the replication factor A protein 1 family. Component of the canonical replication protein A complex (RPA), a heterotrimer composed of RPA1, RPA2 and RPA3. The DNA-binding activity may reside exclusively on the RPA1 subunit. Interacts with PRPF19; the PRP19-CDC5L complex is recruited to the sites of DNA repair where it ubiquitinates the replication protein A complex (RPA). Interacts with RIPK1. Interacts with the polymerase alpha subunit POLA1/p180; this interaction stabilizes the replicative complex and reduces the misincorporation rate of DNA polymerase alpha by acting as a fidelity clamp. Interacts with RAD51 and SENP6 to regulate DNA repair. Interacts with HELB; this interaction promotes HELB recruitment to chromatin following DNA damage. Interacts with PRIMPOL; leading to recruit PRIMPOL on chromatin and stimulate its DNA primase activity. Interacts with XPA; the interaction is direct and associates XPA with the RPA complex. Interacts with ETAA1; the interaction is direct and promotes ETAA1 recruitment at stalled replication forks. Interacts with RPA1; this interaction associates HROB with the RPA complex. Interacts (when poly-ADP-ribosylated) with HTATSF1. Post-translationally, DNA damage-induced 'Lys-63'-linked polyubiquitination by PRPF19 mediates ATRIP recruitment to the RPA complex at sites of DNA damage and activation of ATR. Ubiquitinated by RFWD3 at stalled replication forks in response to DNA damage: ubiquitination by RFWD3 does not lead to degradation by the proteasome and promotes removal of the RPA complex from stalled replication forks, promoting homologous recombination. Sumoylated on lysine residues Lys-458 and Lys-586, with Lys-458 being the major site. Sumoylation promotes recruitment of RAD51 to the DNA damage foci to initiate DNA repair through homologous recombination. Desumoylated by SENP6. In terms of processing, poly-ADP-ribosylated by PARP1; promoting recruitment of HTATSF1.

Its subcellular location is the nucleus. The protein resides in the PML body. Functionally, as part of the heterotrimeric replication protein A complex (RPA/RP-A), binds and stabilizes single-stranded DNA intermediates, that form during DNA replication or upon DNA stress. It prevents their reannealing and in parallel, recruits and activates different proteins and complexes involved in DNA metabolism. Thereby, it plays an essential role both in DNA replication and the cellular response to DNA damage. In the cellular response to DNA damage, the RPA complex controls DNA repair and DNA damage checkpoint activation. Through recruitment of ATRIP activates the ATR kinase a master regulator of the DNA damage response. It is required for the recruitment of the DNA double-strand break repair factors RAD51 and RAD52 to chromatin in response to DNA damage. Also recruits to sites of DNA damage proteins like XPA and XPG that are involved in nucleotide excision repair and is required for this mechanism of DNA repair. Also plays a role in base excision repair (BER) probably through interaction with UNG. Also recruits SMARCAL1/HARP, which is involved in replication fork restart, to sites of DNA damage. May also play a role in telomere maintenance. This chain is Replication protein A 70 kDa DNA-binding subunit (Rpa1), found in Mus musculus (Mouse).